The following is a 159-amino-acid chain: Eukaryotic translation initiation factor 5A-2 (159 aa).

Positions 1 to 10 (MSDDEHHFEA) are enriched in basic and acidic residues. A disordered region spans residues 1–25 (MSDDEHHFEASESGASKTYPQSAGN). Serine 2 carries the post-translational modification Phosphoserine. Positions 13 to 24 (SGASKTYPQSAG) are enriched in polar residues. Lysine 51 carries the hypusine modification.

The protein belongs to the eIF-5A family. In terms of assembly, homodimer. Interacts with AHK4 and AHP1. Cytokinin regulates the formation of the AHP1-AHK4-ELF5A-2 complex. Post-translationally, lys-51 undergoes hypusination, a unique post-translational modification that consists in the addition of a butylamino group from spermidine to lysine side chain, leading to the formation of the unusual amino acid hypusine. eIF-5As are the only known proteins to undergo this modification, which is essential for their function. Ubiquitous. In roots, expressed mostly inside the stele of the mature zone.

It is found in the cytoplasm. The protein localises to the nucleus. In terms of biological role, translation factor that promotes translation elongation and termination, particularly upon ribosome stalling at specific amino acid sequence contexts. Binds between the exit (E) and peptidyl (P) site of the ribosome and promotes rescue of stalled ribosome: specifically required for efficient translation of polyproline-containing peptides as well as other motifs that stall the ribosome. Acts as a ribosome quality control (RQC) cofactor by joining the RQC complex to facilitate peptidyl transfer during CAT tailing step. Regulates cytokinin-mediated root protoxylem specification and represses secifically the expression of AHP6. Regulates the induction of programmed cell death caused by infection with virulent pathogen. The sequence is that of Eukaryotic translation initiation factor 5A-2 (ELF5A-2) from Arabidopsis thaliana (Mouse-ear cress).